The sequence spans 440 residues: RUN domain-containing protein 3A (440 aa).

Positions 52–184 constitute an RUN domain; it reads DDSSEEFVNF…IDFSFCLKGE (133 aa). The tract at residues 213–233 is disordered; sequence DDRESVGGSSSEDSSPEHPYL. Residues 262-317 adopt a coiled-coil conformation; the sequence is YLEELVRLRETQLKNLEAENKRLTQRISEQAEQSLQEKHQLEGVILELQEQLTGLL. Positions 374-402 are disordered; the sequence is LSSESQRLDGKQDGEPWGPIGKDPTPSML.

Belongs to the RUNDC3 family.

The sequence is that of RUN domain-containing protein 3A (rundc3a) from Xenopus tropicalis (Western clawed frog).